The chain runs to 299 residues: S-fimbrial protein subunit SfaH (299 aa).

It belongs to the fimbrial protein family.

The protein resides in the fimbrium. Fimbriae (also called pili), polar filaments radiating from the surface of the bacterium to a length of 0.5-1.5 micrometers and numbering 100-300 per cell, enable bacteria to colonize the epithelium of specific host organs. Its function is as follows. A minor fimbrial subunit. This protein is necessary for full expression of S-specific binding. S-fimbrial adhesins enable pathogenic E.coli causing urinary-tract infections or newborn meningitis to attach to glycoproteins terminating with alpha-sialic acid-(2-3)-beta-Gal. In Escherichia coli O6:K15:H31 (strain 536 / UPEC), this protein is S-fimbrial protein subunit SfaH (sfaH).